The following is a 369-amino-acid chain: tRNA-specific 2-thiouridylase MnmA (369 aa).

ATP-binding positions include 16–23 (AMSGGVDS) and Met42. Cys110 functions as the Nucleophile in the catalytic mechanism. Cys110 and Cys206 are oxidised to a cystine. Gly134 contributes to the ATP binding site. An interaction with tRNA region spans residues 156–158 (KDQ). Cys206 serves as the catalytic Cysteine persulfide intermediate.

Belongs to the MnmA/TRMU family.

It is found in the cytoplasm. It carries out the reaction S-sulfanyl-L-cysteinyl-[protein] + uridine(34) in tRNA + AH2 + ATP = 2-thiouridine(34) in tRNA + L-cysteinyl-[protein] + A + AMP + diphosphate + H(+). In terms of biological role, catalyzes the 2-thiolation of uridine at the wobble position (U34) of tRNA, leading to the formation of s(2)U34. The chain is tRNA-specific 2-thiouridylase MnmA from Orientia tsutsugamushi (strain Boryong) (Rickettsia tsutsugamushi).